We begin with the raw amino-acid sequence, 201 residues long: Protein tirC (201 aa).

In terms of domain architecture, TIR spans 52–186 (ERIKVFIVHG…YVWINYTEDL (135 aa)).

The protein is Protein tirC (tirC) of Dictyostelium discoideum (Social amoeba).